A 509-amino-acid chain; its full sequence is ATP synthase subunit alpha (509 aa).

169-176 contacts ATP; the sequence is GDRQTGKT.

This sequence belongs to the ATPase alpha/beta chains family. As to quaternary structure, F-type ATPases have 2 components, CF(1) - the catalytic core - and CF(0) - the membrane proton channel. CF(1) has five subunits: alpha(3), beta(3), gamma(1), delta(1), epsilon(1). CF(0) has four main subunits: a(1), b(1), b'(1) and c(9-12).

The protein localises to the cell inner membrane. The enzyme catalyses ATP + H2O + 4 H(+)(in) = ADP + phosphate + 5 H(+)(out). Its function is as follows. Produces ATP from ADP in the presence of a proton gradient across the membrane. The alpha chain is a regulatory subunit. This Bradyrhizobium sp. (strain BTAi1 / ATCC BAA-1182) protein is ATP synthase subunit alpha.